Consider the following 129-residue polypeptide: Glycine cleavage system H protein (129 aa).

A Lipoyl-binding domain is found at 24 to 106; sequence SYTVGITEHA…YGEGWFFRVM (83 aa). An N6-lipoyllysine modification is found at lysine 65.

This sequence belongs to the GcvH family. The glycine cleavage system is composed of four proteins: P, T, L and H. It depends on (R)-lipoate as a cofactor.

In terms of biological role, the glycine cleavage system catalyzes the degradation of glycine. The H protein shuttles the methylamine group of glycine from the P protein to the T protein. This is Glycine cleavage system H protein from Shewanella baltica (strain OS155 / ATCC BAA-1091).